Reading from the N-terminus, the 292-residue chain is Homoserine kinase (292 aa).

Residue 84 to 94 (PLARGMGSSSA) participates in ATP binding.

It belongs to the GHMP kinase family. Homoserine kinase subfamily.

The protein localises to the cytoplasm. It carries out the reaction L-homoserine + ATP = O-phospho-L-homoserine + ADP + H(+). Its pathway is amino-acid biosynthesis; L-threonine biosynthesis; L-threonine from L-aspartate: step 4/5. Catalyzes the ATP-dependent phosphorylation of L-homoserine to L-homoserine phosphate. The sequence is that of Homoserine kinase from Thermus thermophilus (strain ATCC 27634 / DSM 579 / HB8).